The following is a 62-amino-acid chain: Overexpressed in colon carcinoma 1 protein homolog (62 aa).

The segment covering 1–16 (MGCGNSTAGGAGGRGA) has biased composition (gly residues). The tract at residues 1-62 (MGCGNSTAGG…SGQTKAAPKD (62 aa)) is disordered.

Belongs to the OCC1 family.

The sequence is that of Overexpressed in colon carcinoma 1 protein homolog from Gallus gallus (Chicken).